The following is a 156-amino-acid chain: Guanine deaminase (156 aa).

Residues 1-132 (MNHETFLKRA…KPAEERTIPF (132 aa)) enclose the CMP/dCMP-type deaminase domain. His53 provides a ligand contact to Zn(2+). Catalysis depends on Glu55, which acts as the Proton donor. Zn(2+) is bound by residues Cys83 and Cys86.

The protein belongs to the cytidine and deoxycytidylate deaminase family. The cofactor is Zn(2+).

It carries out the reaction guanine + H2O + H(+) = xanthine + NH4(+). It participates in purine metabolism; guanine degradation; xanthine from guanine: step 1/1. Functionally, catalyzes the hydrolytic deamination of guanine, producing xanthine and ammonia. The chain is Guanine deaminase (guaD) from Bacillus subtilis (strain 168).